Reading from the N-terminus, the 717-residue chain is SAGA factor-like TAF6 (717 aa).

A sufficient for interaction with Taf9 region spans residues 123–204 (KSYAGFDPRS…VPPMLGAMDS (82 aa)).

It belongs to the TAF6 family. In terms of assembly, component of the Spt-Ada-Gcn5 acetyltransferase (SAGA) complex consisting of wda/Taf5L, Saf6, Taf9, Taf10b, Taf12, Ada1, Spt3, Spt7, Spt20, Sf3b3, Sf3b5, Nipped-A/Tra1, a histone acetyltransferase (HAT) module made up of Gcn5, Ada2b (Isoform B), Ada3 and Sgf29, and a deubiquitinase (DUB) module made up of not/nonstop, Sgf11 and e(y)2 tethered to SAGA by Atxn7; not essential for SAGA complex assembly, histone-modifying activity or chromosomal recruitment. Interacts (via N-terminal histone-fold domain) with Taf9 (via N-terminal histone-fold domain); the interaction is probably direct. Probably forms a histone-like heterooctamer structure with Taf9, Taf12 and Taf10b.

Its subcellular location is the nucleus. The protein localises to the chromosome. Its function is as follows. Component of the transcription regulatory complex SAGA, a multiprotein complex that activates transcription by remodeling chromatin and mediating histone acetylation and deubiquitination. The SAGA complex predominantly acetylates histone H3. Involved in SAGA complex coactivator function but not essential for SAGA complex assembly, histone-modifying activity or chromosomal recruitment. Required for oogenesis; involved in transcriptional activation. This is SAGA factor-like TAF6 from Drosophila melanogaster (Fruit fly).